The sequence spans 281 residues: MIDEAIRSISKKYTIGGHISVAGGLHNGPARAAVFGFPTFQFFSKNQMRWSSPPLKDDEAAAFKSEVRKYGIESTMIHASYLINLASADPDLYKRSMEAFHDEIDRSDKLGSTFLTVHPGSNPDRADGIRRVRDALSTIGDHAVIILIENTAGQGNVIGTRLDEVAKIIDTSDKKLGVCIDTCHAWASGYDLRDSLEKFIESLDYTIGLDRIFAFHLNDAKREMGSRIDRHELIGKGTIDGGLINLIRDDRLRAKPKIMETPFGEARFEDNLRYMSSKIGE.

Residues His78, His118, Glu149, Asp181, His184, His216, Asp229, His231, and Glu260 each coordinate Zn(2+).

This sequence belongs to the AP endonuclease 2 family. Zn(2+) serves as cofactor.

It catalyses the reaction Endonucleolytic cleavage to 5'-phosphooligonucleotide end-products.. In terms of biological role, endonuclease IV plays a role in DNA repair. It cleaves phosphodiester bonds at apurinic or apyrimidinic (AP) sites, generating a 3'-hydroxyl group and a 5'-terminal sugar phosphate. The chain is Probable endonuclease 4 from Thermoplasma acidophilum (strain ATCC 25905 / DSM 1728 / JCM 9062 / NBRC 15155 / AMRC-C165).